A 307-amino-acid polypeptide reads, in one-letter code: UDP-N-acetylenolpyruvoylglucosamine reductase (307 aa).

Positions 29 to 197 (RVGGPAEWFA…LSARFRLDPG (169 aa)) constitute an FAD-binding PCMH-type domain. Arg176 is an active-site residue. Ser227 functions as the Proton donor in the catalytic mechanism. Glu297 is a catalytic residue.

Belongs to the MurB family. FAD is required as a cofactor.

It is found in the cytoplasm. It carries out the reaction UDP-N-acetyl-alpha-D-muramate + NADP(+) = UDP-N-acetyl-3-O-(1-carboxyvinyl)-alpha-D-glucosamine + NADPH + H(+). Its pathway is cell wall biogenesis; peptidoglycan biosynthesis. Its function is as follows. Cell wall formation. The protein is UDP-N-acetylenolpyruvoylglucosamine reductase of Prochlorococcus marinus (strain MIT 9313).